The chain runs to 656 residues: Threonine--tRNA ligase (656 aa).

The TGS domain maps to 2-67 (LMSQITIILP…KDQTKVALVT (66 aa)). The tract at residues 251–542 (DHRKLGKELG…YLEHTAGHLP (292 aa)) is catalytic. Zn(2+)-binding residues include Cys-342, His-393, and His-519.

It belongs to the class-II aminoacyl-tRNA synthetase family. In terms of assembly, homodimer. Requires Zn(2+) as cofactor.

Its subcellular location is the cytoplasm. The catalysed reaction is tRNA(Thr) + L-threonine + ATP = L-threonyl-tRNA(Thr) + AMP + diphosphate + H(+). Catalyzes the attachment of threonine to tRNA(Thr) in a two-step reaction: L-threonine is first activated by ATP to form Thr-AMP and then transferred to the acceptor end of tRNA(Thr). Also edits incorrectly charged L-seryl-tRNA(Thr). The chain is Threonine--tRNA ligase from Bdellovibrio bacteriovorus (strain ATCC 15356 / DSM 50701 / NCIMB 9529 / HD100).